The following is a 1555-amino-acid chain: UDP-glucose:glycoprotein glucosyltransferase 1 (1555 aa).

Residues 1 to 42 form the signal peptide; it reads MGCKGDASGACAAGALPVTGVCYKMGVLVVLTVLWLFSSVKA. 2 N-linked (GlcNAc...) asparagine glycosylation sites follow: Asn536 and Asn1228. Residues 1244–1555 are glucosyltransferase; that stretch reads KTEEVKQDKD…REGPQKREEL (312 aa). Ser1277 carries the post-translational modification Phosphoserine. Residues 1534 to 1555 are disordered; the sequence is GALYKEKTKEPSREGPQKREEL. The Prevents secretion from ER motif lies at 1552–1555; sequence REEL.

The protein belongs to the glycosyltransferase 8 family. In terms of assembly, monomer as well as in a tight complex with SELENOF. Interacts with METTL23. Part of a large chaperone multiprotein complex comprising DNAJB11, HSP90B1, HSPA5, HYOU, PDIA2, PDIA4, PDIA6, PPIB, SDF2L1, UGGT1 and very small amounts of ERP29, but not, or at very low levels, CALR nor CANX. Requires Ca(2+) as cofactor. It depends on Mn(2+) as a cofactor. As to expression, higher levels in pancreas, skeletal muscle, kidney, and brain. Low levels in lung and heart.

Its subcellular location is the endoplasmic reticulum lumen. It is found in the endoplasmic reticulum-Golgi intermediate compartment. It catalyses the reaction N(4)-(alpha-D-Man-(1-&gt;2)-alpha-D-Man-(1-&gt;2)-alpha-D-Man-(1-&gt;3)-[alpha-D-Man-(1-&gt;2)-alpha-D-Man-(1-&gt;3)-[alpha-D-Man-(1-&gt;2)-alpha-D-Man-(1-&gt;6)]-alpha-D-Man-(1-&gt;6)]-beta-D-Man-(1-&gt;4)-beta-D-GlcNAc-(1-&gt;4)-beta-D-GlcNAc)-L-asparaginyl-[protein] (N-glucan mannose isomer 9A1,2,3B1,2,3) + UDP-alpha-D-glucose = N(4)-(alpha-D-Glc-(1-&gt;3)-alpha-D-Man-(1-&gt;2)-alpha-D-Man-(1-&gt;2)-alpha-D-Man-(1-&gt;3)-[alpha-D-Man-(1-&gt;2)-alpha-D-Man-(1-&gt;3)-[alpha-D-Man-(1-&gt;2)-alpha-D-Man-(1-&gt;6)]-alpha-D-Man-(1-&gt;6)]-beta-D-Man-(1-&gt;4)-beta-D-GlcNAc-(1-&gt;4)-beta-D-GlcNAc)-L-asparaginyl-[protein] + UDP + H(+). Its pathway is protein modification; protein glycosylation. Catalytic activity is enhanced by complex formation with SELENOF. Recognizes glycoproteins with minor folding defects. Reglucosylates single N-glycans near the misfolded part of the protein, thus providing quality control for protein folding in the endoplasmic reticulum. Reglucosylated proteins are recognized by calreticulin for recycling to the endoplasmic reticulum and refolding or degradation. This Homo sapiens (Human) protein is UDP-glucose:glycoprotein glucosyltransferase 1 (UGGT1).